We begin with the raw amino-acid sequence, 447 residues long: MKKTSVRDIALEALIKLEQNQAYSNLLLKSVIKSNELSDQNRGLLTELVYGTLQNKIALDYMLKPFINKPQKVKPWVIQLLRLSLYQMEYLEKIPDRAAIHEAVEIAKIRGHKGIASFVNGVLRSIQREGVPSFDAIEDPVRRLATETSHPEWLVKEWADAYGFEAAEKICRIHLIPPKQTLRVNQMKADRAELLDQMAAEGIEVEKGDLAEDAVKLLKGTIAGTHFFQNGEVSIQDESSMLVARALDPKSDETVLDACAAPGGKSAHIAELMKNKGSVTSLDLHKHKVKLIKEAADRLGLTIIHAETMDARKAGETFENEQFDRILVDAPCSGFGVIRRKPDMKYTKKPDDSARLAEIQLSILREIAPLVKKGGTLVYSTCTMDRTENDEVIHAFIQEHPDFEPDLSLEKRLPEKVRPFVRDGRLQILPHYFGTDGFFICSMRKKG.

Residues 259–265 (CAAPGGK), Asp-283, Asp-310, and Asp-329 contribute to the S-adenosyl-L-methionine site. The active-site Nucleophile is the Cys-382.

This sequence belongs to the class I-like SAM-binding methyltransferase superfamily. RsmB/NOP family.

The protein localises to the cytoplasm. The catalysed reaction is cytidine(967) in 16S rRNA + S-adenosyl-L-methionine = 5-methylcytidine(967) in 16S rRNA + S-adenosyl-L-homocysteine + H(+). Specifically methylates the cytosine at position 967 (m5C967) of 16S rRNA. The sequence is that of Probable ribosomal RNA small subunit methyltransferase B from Bacillus subtilis (strain 168).